A 135-amino-acid chain; its full sequence is Actin-related protein 2/3 complex subunit 5B (135 aa).

Belongs to the ARPC5 family. Component of the Arp2/3 complex composed of ARP2, ARP3, ARPC1/p41-ARC, ARPC2/p34-ARC, ARPC3/p21-ARC, ARPC4/p20-ARC and ARPC5/p16-ARC.

It is found in the cytoplasm. It localises to the cytoskeleton. The protein resides in the cell projection. Functions as a component of the Arp2/3 complex which is involved in regulation of actin polymerization and together with an activating nucleation-promoting factor (NPF) mediates the formation of branched actin networks. Arp2/3 complex plays a critical role in the control of cell morphogenesis via the modulation of cell polarity development. This Arabidopsis thaliana (Mouse-ear cress) protein is Actin-related protein 2/3 complex subunit 5B (ARPC5B).